A 533-amino-acid polypeptide reads, in one-letter code: Conglutin beta 2 (533 aa).

An N-terminal signal peptide occupies residues 1–30; it reads MGKMRVRFPTLVLVLGIVFLMAVSIGIAYG. Positions 31–108 are excised as a propeptide; sequence EKDVLKSHER…EQQQGSPSYS (78 aa). 2 stretches are compositionally biased toward basic and acidic residues: residues 37–51 and 79–99; these read SHER…EWQP and SGYE…REQE. Disordered stretches follow at residues 37–123 and 315–337; these read SHER…QRFQ and KHAQ…LRSN. Cupin type-1 domains follow at residues 115–273 and 332–494; these read YHFS…EEIQ and FNLR…EDIE. 2 N-linked (GlcNAc...) asparagine glycosylation sites follow: asparagine 363 and asparagine 444. The tract at residues 503 to 533 is disordered; sequence SYFANGQPQQQQQQQSEKEGRRGRRGSSLPF.

Belongs to the 7S seed storage protein family. As to quaternary structure, multimers. Give rise to a complex array of processed forms, due to a large number of processing sites and changes in glycosylation.

Seed storage protein. Accumulates during seed development and is hydrolyzed after germination to provide a carbon and nitrogen source for the developing seedling. In terms of biological role, has a lectin-like activity. In Lupinus albus (White lupine), this protein is Conglutin beta 2.